A 205-amino-acid polypeptide reads, in one-letter code: Holliday junction branch migration complex subunit RuvA (205 aa).

The tract at residues 1-62 (MFEYVTGYVE…EDIMALYGFK (62 aa)) is domain I. A domain II region spans residues 63–141 (TREERLLFTK…DVVPDAFVDL (79 aa)). A flexible linker region spans residues 142 to 152 (FSDTERFDEKK). Residues 153–205 (GSSAELDEALEALRALGYAEREVSRVVPELLKESLTTDQYIKKALSLLLNGKR) form a domain III region.

It belongs to the RuvA family. In terms of assembly, homotetramer. Forms an RuvA(8)-RuvB(12)-Holliday junction (HJ) complex. HJ DNA is sandwiched between 2 RuvA tetramers; dsDNA enters through RuvA and exits via RuvB. An RuvB hexamer assembles on each DNA strand where it exits the tetramer. Each RuvB hexamer is contacted by two RuvA subunits (via domain III) on 2 adjacent RuvB subunits; this complex drives branch migration. In the full resolvosome a probable DNA-RuvA(4)-RuvB(12)-RuvC(2) complex forms which resolves the HJ.

The protein resides in the cytoplasm. Functionally, the RuvA-RuvB-RuvC complex processes Holliday junction (HJ) DNA during genetic recombination and DNA repair, while the RuvA-RuvB complex plays an important role in the rescue of blocked DNA replication forks via replication fork reversal (RFR). RuvA specifically binds to HJ cruciform DNA, conferring on it an open structure. The RuvB hexamer acts as an ATP-dependent pump, pulling dsDNA into and through the RuvAB complex. HJ branch migration allows RuvC to scan DNA until it finds its consensus sequence, where it cleaves and resolves the cruciform DNA. This is Holliday junction branch migration complex subunit RuvA from Bacillus cereus (strain ATCC 14579 / DSM 31 / CCUG 7414 / JCM 2152 / NBRC 15305 / NCIMB 9373 / NCTC 2599 / NRRL B-3711).